Here is a 154-residue protein sequence, read N- to C-terminus: Crossover junction endodeoxyribonuclease RuvC (154 aa).

Active-site residues include aspartate 7, glutamate 67, and aspartate 139. Aspartate 7, glutamate 67, and aspartate 139 together coordinate Mg(2+).

The protein belongs to the RuvC family. Homodimer which binds Holliday junction (HJ) DNA. The HJ becomes 2-fold symmetrical on binding to RuvC with unstacked arms; it has a different conformation from HJ DNA in complex with RuvA. In the full resolvosome a probable DNA-RuvA(4)-RuvB(12)-RuvC(2) complex forms which resolves the HJ. Mg(2+) is required as a cofactor.

The protein localises to the cytoplasm. It catalyses the reaction Endonucleolytic cleavage at a junction such as a reciprocal single-stranded crossover between two homologous DNA duplexes (Holliday junction).. In terms of biological role, the RuvA-RuvB-RuvC complex processes Holliday junction (HJ) DNA during genetic recombination and DNA repair. Endonuclease that resolves HJ intermediates. Cleaves cruciform DNA by making single-stranded nicks across the HJ at symmetrical positions within the homologous arms, yielding a 5'-phosphate and a 3'-hydroxyl group; requires a central core of homology in the junction. The consensus cleavage sequence is 5'-(A/T)TT(C/G)-3'. Cleavage occurs on the 3'-side of the TT dinucleotide at the point of strand exchange. HJ branch migration catalyzed by RuvA-RuvB allows RuvC to scan DNA until it finds its consensus sequence, where it cleaves and resolves the cruciform DNA. The sequence is that of Crossover junction endodeoxyribonuclease RuvC from Prochlorococcus marinus (strain NATL1A).